Reading from the N-terminus, the 368-residue chain is MCGRFALAYDSGDLPQLLRDWNLPVNTPKDASSNSQHPHDEEDTKDQPTVSKDIFKASYNISPTNYSAVYRPDTKAIQFMRWGLVPFWTKDVSQFKTYRTFNARLENLQESKMWMRPCEKKRCAVLMSGYFEWKTVGKKKTPYFISRRDGRLMFVAGMYDYVEKDDLYTFTIITAQGPRELEWLHERMPCVLEPGTESWDAWMDVDKTTWSTEELVKLLKPDYDESKLQFYQVTDDVGKTTNTGERLIKPLLKEDSDMFSVKREKEEALLENDNEQGIDNRGVKGDKSLKGEDVFNQKKSLKRNSYDGLKKNEEQEETTLPEEGSIGDRVKREEANLSPKREGNREKRNIVNMLGNQKDSRGKKKIKK.

Cys-2 acts as the Nucleophile in catalysis. Position 2 is a thiazolidine linkage to a ring-opened DNA abasic site (Cys-2). The disordered stretch occupies residues 25 to 48; that stretch reads VNTPKDASSNSQHPHDEEDTKDQP. Basic and acidic residues predominate over residues 37-46; sequence HPHDEEDTKD. Residue Glu-132 is part of the active site. The interval 270-368 is disordered; sequence LENDNEQGID…DSRGKKKIKK (99 aa). Composition is skewed to basic and acidic residues over residues 281 to 296, 304 to 313, and 326 to 349; these read RGVKGDKSLKGEDVFN, NSYDGLKKNE, and IGDRVKREEANLSPKREGNREKRN. At Ser-338 the chain carries Phosphoserine.

The protein belongs to the SOS response-associated peptidase family.

Its subcellular location is the chromosome. With respect to regulation, formation and reversal of DNA-protein cross-link depends on DNA context. Catalyzes formation of the thiazolidine linkage in presence of abasic sites in single-stranded DNA. Mediates the reversal of the thiazolidine cross-link in presence of double stranded DNA. Functionally, sensor of abasic sites in single-stranded DNA (ssDNA) required to preserve genome integrity by promoting error-free repair of abasic sites. Recognizes and binds abasic sites in ssDNA at replication forks and chemically modifies the lesion by forming a covalent cross-link with DNA: forms a stable thiazolidine linkage between a ring-opened abasic site and the alpha-amino and sulfhydryl substituents of its N-terminal catalytic cysteine residue. The DNA-protein cross-link is then reversed: able to catalyze the reversal of the thiazolidine cross-link and cycle between a cross-link and a non-cross-linked state depending on DNA context: mediates self-reversal of the thiazolidine cross-link in double stranded DNA. Acts as a protease: mediates autocatalytic processing of its N-terminal methionine in order to expose the catalytic cysteine. In Saccharomyces cerevisiae (strain ATCC 204508 / S288c) (Baker's yeast), this protein is Abasic site processing protein YMR114C.